The sequence spans 741 residues: MAEPVSPLKHFVLAKKAITAIFDQLLEFVTEGSHFVEATYKNPELDRIATEDDLVEMQGYKDKLSIIGEVLSRRHMKVAFFGRTSSGKSSVINAMLWDKVLPSGIGHITNCFLSVEGTDGDKAYLMTEGSDEKKSVKTVNQLAHALHMDKDLKAGCLVRVFWPKAKCALLRDDLVLVDSPGTDVTTELDSWIDKFCLDADVFVLVANSESTLMNTEKHFFHKVNERLSKPNIFILNNRWDASASEPEYMEDVRRQHMERCLHFLVEELKVVNALEAQNRIFFVSAKEVLSARKQKAQGMPESGVALAEGFHARLQEFQNFEQIFEECISQSAVKTKFEQHTIRAKQILATVKNIMDSVNLAAEDKRHYSVEEREDQIDRLDFIRNQMNLLTLDVKKKIKEVTEEVANKVSCAMTDEICRLSVLVDEFCSEFHPNPDVLKIYKSELNKHIEDGMGRNLADRCTDEVNALVLQTQQEIIENLKPLLPAGIQDKLHTLIPCKKFDLSYNLNYHKLCSDFQEDIVFRFSLGWSSLVHRFLGPRNAQRVLLGLSEPIFQLPRSLASTPTAPTTPATPDNASQEELMITLVTGLASVTSRTSMGIIIVGGVIWKTIGWKLLSVSLTMYGALYLYERLSWTTHAKERAFKQQFVNYATEKLRMIVSSTSANCSHQVKQQIATTFARLCQQVDITQKQLEEEIARLPKEIDQLEKIQNNSKLLRNKAVQLENELENFTKQFLPSSNEES.

Over 1–584 (MAEPVSPLKH…ASQEELMITL (584 aa)) the chain is Cytoplasmic. The interval 9–73 (KHFVLAKKAI…LSIIGEVLSR (65 aa)) is part of a helix bundle domain, formed by helices from N-terminal and C-terminal regions. Positions 72 to 321 (SRRHMKVAFF…ARLQEFQNFE (250 aa)) constitute a Dynamin-type G domain. Residues 82 to 89 (GRTSSGKS) form a G1 motif region. 85–90 (SSGKSS) lines the GTP pocket. A G2 motif region spans residues 108–109 (IT). The tract at residues 178-181 (DSPG) is G3 motif. GTP is bound at residue 237-240 (NRWD). Residues 237–240 (NRWD) are G4 motif. Position 266 (Glu266) is a region of interest, G5 motif. Positions 284 and 286 each coordinate GTP. Positions 338-364 (EQHTIRAKQILATVKNIMDSVNLAAED) are part of a helix bundle domain, formed by helices from N-terminal and C-terminal regions. Residues 371-408 (EEREDQIDRLDFIRNQMNLLTLDVKKKIKEVTEEVANK) adopt a coiled-coil conformation. Residues 585–605 (VTGLASVTSRTSMGIIIVGGV) form a helical membrane-spanning segment. The Mitochondrial intermembrane segment spans residues 606–608 (IWK). Residues 609–629 (TIGWKLLSVSLTMYGALYLYE) form a helical membrane-spanning segment. At 630–741 (RLSWTTHAKE…QFLPSSNEES (112 aa)) the chain is on the cytoplasmic side. A coiled-coil region spans residues 679–734 (RLCQQVDITQKQLEEEIARLPKEIDQLEKIQNNSKLLRNKAVQLENELENFTKQFL). The segment at 703–734 (DQLEKIQNNSKLLRNKAVQLENELENFTKQFL) is part of a helix bundle domain, formed by helices from N-terminal and C-terminal regions.

This sequence belongs to the TRAFAC class dynamin-like GTPase superfamily. Dynamin/Fzo/YdjA family. Mitofusin subfamily. Homodimer, also in the absence of bound GTP. Forms higher oligomers in the presence of a transition state GTP analog. Forms homomultimers and heteromultimers with MFN2. Oligomerization is essential for mitochondrion fusion. Component of a high molecular weight multiprotein complex. Interacts with VAT1. Interacts with THG1L; THG1L probably functions as a guanyl-nucleotide exchange factor/GEF, activating MFN1. In terms of processing, ubiquitinated by non-degradative ubiquitin by PRKN. Deubiquitination by USP30 inhibits mitochondrial fusion. Ubiquitinated by MARCHF5. When mitochondria are depolarized and dysfunctional, it is ubiquitinated by a SCF (SKP1-CUL1-F-box protein) E3 ubiquitin-protein ligase complex that contains FBXO7 and PRKN. Detected in kidney and heart (at protein level). Ubiquitous. Expressed at slightly higher level in kidney and heart. Isoform 2 may be overexpressed in some tumors, such as lung cancers.

It is found in the mitochondrion outer membrane. The protein resides in the cytoplasm. The enzyme catalyses GTP + H2O = GDP + phosphate + H(+). Functionally, mitochondrial outer membrane GTPase that mediates mitochondrial clustering and fusion. Membrane clustering requires GTPase activity. It may involve a major rearrangement of the coiled coil domains. Mitochondria are highly dynamic organelles, and their morphology is determined by the equilibrium between mitochondrial fusion and fission events. Overexpression induces the formation of mitochondrial networks (in vitro). Has low GTPase activity. This Homo sapiens (Human) protein is Mitofusin-1 (MFN1).